The sequence spans 314 residues: Melanocyte-stimulating hormone receptor (314 aa).

Over 1-35 (MSMLAPLRLVREPWNASEGNQSNATAGAGGAWCQG) the chain is Extracellular. 3 N-linked (GlcNAc...) asparagine glycosylation sites follow: Asn15, Asn20, and Asn23. The helical transmembrane segment at 36 to 61 (LDIPNELFLTLGLVSLVENLLVVAAI) threads the bilayer. The Cytoplasmic segment spans residues 62–70 (LKNRNLHSP). A helical membrane pass occupies residues 71–91 (TYYFICCLAVSDMLVSVSNLA). Residues 92-116 (KTLFMLLMEHGVLVIRASIVRHMDN) are Extracellular-facing. The helical transmembrane segment at 117–138 (VIDMLICSSVVSSLSFLGVIAV) threads the bilayer. Residues 139–161 (DRYITIFYALRYHSIMTLQRAVV) are Cytoplasmic-facing. Residues 162 to 181 (TMASVWLASTVSSTVLITYY) form a helical membrane-spanning segment. Residues 182–189 (RNNAILLC) are Extracellular-facing. Residues 190–209 (LIGFFLFMLVLMLVLYIHMF) form a helical membrane-spanning segment. Residues 210 to 237 (ALACHHVRSISSQQKQPTIYRTSSLKGA) are Cytoplasmic-facing. The chain crosses the membrane as a helical span at residues 238–263 (VTLTILLGVFFICWGPFFFHLILIVT). The Extracellular segment spans residues 264 to 276 (CPTNPFCTCFFSY). A helical membrane pass occupies residues 277–297 (FNLFLILIICNSVVDPLIYAF). The Cytoplasmic segment spans residues 298–314 (RSQELRRTLREVVLCSW). The S-palmitoyl cysteine moiety is linked to residue Cys312.

This sequence belongs to the G-protein coupled receptor 1 family.

It localises to the cell membrane. Receptor for MSH (alpha, beta and gamma) and ACTH. The activity of this receptor is mediated by G proteins which activate adenylate cyclase. Mediates melanogenesis via regulation of cAMP signaling in melanocytes. This Gallus gallus (Chicken) protein is Melanocyte-stimulating hormone receptor (MC1R).